Consider the following 649-residue polypeptide: Protein PSK SIMULATOR 3 (649 aa).

G2 is lipidated: N-myristoyl glycine. The tract at residues 18 to 43 (SGSSVADDGREPDFGHSQPNGQTSLI) is disordered.

The protein resides in the nucleus. Its function is as follows. Promotes plant growth, especially at the vegetative stage, probably via the regulation of phytosulfokine (PSK) signaling; PSK are peptide phytohormones acting as growth factors. Together with PSI2 and PSI3, required during vegetative growth and reproduction. May also have a function in carbohydrate metabolism. The polypeptide is Protein PSK SIMULATOR 3 (Arabidopsis thaliana (Mouse-ear cress)).